A 415-amino-acid chain; its full sequence is Transposase for insertion sequence element IS1081 (415 aa).

It belongs to the transposase mutator family.

Its function is as follows. Required for the transposition of the insertion element. The chain is Transposase for insertion sequence element IS1081 from Mycobacterium bovis (strain ATCC BAA-935 / AF2122/97).